The primary structure comprises 702 residues: Methionine--tRNA ligase (702 aa).

Residues 14-24 carry the 'HIGH' region motif; sequence PYANGPVHLGH. Zn(2+)-binding residues include Cys-146, Cys-149, Cys-159, and Cys-162. Residues 344 to 348 carry the 'KMSKS' region motif; that stretch reads KFSKS. Lys-347 is an ATP binding site. The 102-residue stretch at 601 to 702 folds into the tRNA-binding domain; sequence DFQKVDLRVA…GEKINGQSVQ (102 aa).

Belongs to the class-I aminoacyl-tRNA synthetase family. MetG type 1 subfamily. In terms of assembly, homodimer. The cofactor is Zn(2+).

The protein localises to the cytoplasm. The enzyme catalyses tRNA(Met) + L-methionine + ATP = L-methionyl-tRNA(Met) + AMP + diphosphate. In terms of biological role, is required not only for elongation of protein synthesis but also for the initiation of all mRNA translation through initiator tRNA(fMet) aminoacylation. This is Methionine--tRNA ligase from Chlorobium luteolum (strain DSM 273 / BCRC 81028 / 2530) (Pelodictyon luteolum).